The chain runs to 254 residues: 2-dehydro-3-deoxy-D-gluconate 5-dehydrogenase (254 aa).

Residue L16–I40 coordinates NAD(+). S146 serves as a coordination point for substrate. Residue Y159 is the Proton acceptor of the active site.

This sequence belongs to the short-chain dehydrogenases/reductases (SDR) family.

The catalysed reaction is 2-dehydro-3-deoxy-D-gluconate + NAD(+) = 3-deoxy-D-glycero-2,5-hexodiulosonate + NADH + H(+). The protein operates within glycan metabolism; pectin degradation; 2-dehydro-3-deoxy-D-gluconate from pectin: step 5/5. Catalyzes the reduction of 2,5-diketo-3-deoxygluconate (DKII or 4,6-dihydroxy-2,5-dioxohexanoate) into 2-keto-3-deoxygluconate (KDG or 2-dehydro-3-deoxygluconate) with a concomitant oxidation of NADH. The polypeptide is 2-dehydro-3-deoxy-D-gluconate 5-dehydrogenase (kduD) (Bacillus subtilis (strain 168)).